Here is a 905-residue protein sequence, read N- to C-terminus: MTDKSSSNLVPVNIEDEMKVSYLDYAMSVIVSRAIPDVRDGLKPVHRRIIYSMHEAGNHASKPYRKSARIVGDVMGKYHPHGDSAIYDALVRMAQDFSLRLPLVDGQGNFGSMDGDAAAAMRYTESRMAKVSYKLVEDIDKETVSFNPNYDGSEEEPSVLPAMFPNLLVNGSGGIAVGMATNIPPHNLGEVIDACCLYIDNNDIEILDLLEVVKGPDFPTGSMILGISGIRSAYLTGRGSIIMRGRAEIENIGNNRQAIIITEIPYMVNKARLVEKIAEMVKEKRIEGISDLRDESNKNGVRIFIELKKDVVAEVVLNQIYACTQLQTSFGVIMLALKDGLPKVMNLKEVIAAFVSFREVVITNRTIYLLNKARDRAHILLGLTIAVSNIDEIIRIIKASNDSNAAKQELMARQWEALNILPLVKLVDDKAMLNEQGKCNFTEVQAKAILEMRLQRLTAMEKNKLEEDLKNLITEITEYLNILGSRTRLLEILKEELIKVKEEFATPRLTSIEFGEFDQDIEDLIQREEMVVTVTLGGYIKRVPLSSYRAQKRGGKGRSGLSMRDEDITTQVFVGSTHTPMLFFSNIGQVYSLKLYKLPLSNPQGKGRPMVNILPLKANEHITNIMPLPENQDERDNLNIMFATAKGNIRRSDLLDFKKLQSNGKIAIRLDEDDKLIDVKPCKEDEHILLATKAGKALRFPVESLRVIKSRTSDGVRGMKLAKEDSVISMTVLKGISSTKEDRDAYLSVPWEQRLEIAKGEAFNPEELGVSLTAPAIVEMANSEEFILTVTENGFGKRSSAYGYRITDRGGSGIINMDINDKTGLVVGVMPVKMDDELMLITNSGKLIRCKLESVRITGRNTSGVILFKLDDGEKVVSVSLIAETAESEEDSELEEEGLEQSEEV.

The Topo IIA-type catalytic domain occupies 35-524 (IPDVRDGLKP…GEFDQDIEDL (490 aa)). Y123 serves as the catalytic O-(5'-phospho-DNA)-tyrosine intermediate. Residues 551–557 (QKRGGKG) carry the GyrA-box motif. The disordered stretch occupies residues 885–905 (TAESEEDSELEEEGLEQSEEV). A compositionally biased stretch (acidic residues) spans 886–905 (AESEEDSELEEEGLEQSEEV).

The protein belongs to the type II topoisomerase GyrA/ParC subunit family. As to quaternary structure, heterotetramer, composed of two GyrA and two GyrB chains. In the heterotetramer, GyrA contains the active site tyrosine that forms a transient covalent intermediate with DNA, while GyrB binds cofactors and catalyzes ATP hydrolysis.

It localises to the cytoplasm. The enzyme catalyses ATP-dependent breakage, passage and rejoining of double-stranded DNA.. In terms of biological role, a type II topoisomerase that negatively supercoils closed circular double-stranded (ds) DNA in an ATP-dependent manner to modulate DNA topology and maintain chromosomes in an underwound state. Negative supercoiling favors strand separation, and DNA replication, transcription, recombination and repair, all of which involve strand separation. Also able to catalyze the interconversion of other topological isomers of dsDNA rings, including catenanes and knotted rings. Type II topoisomerases break and join 2 DNA strands simultaneously in an ATP-dependent manner. This is DNA gyrase subunit A from Rickettsia conorii (strain ATCC VR-613 / Malish 7).